The sequence spans 454 residues: Bifunctional protein GlmU (454 aa).

A pyrophosphorylase region spans residues 1–227 (MTQLSVVILA…FMEVEGANNR (227 aa)). UDP-N-acetyl-alpha-D-glucosamine-binding positions include 9–12 (LAAG), lysine 23, glutamine 74, 79–80 (GT), 101–103 (YGD), glycine 138, glutamate 152, asparagine 167, and asparagine 225. Mg(2+) is bound at residue aspartate 103. Asparagine 225 contacts Mg(2+). The interval 228–248 (LQLAALERFYQKTQAEKLLLA) is linker. Residues 249–454 (GVRLIDQARF…QGWQRPTKKK (206 aa)) form an N-acetyltransferase region. Arginine 331 and lysine 349 together coordinate UDP-N-acetyl-alpha-D-glucosamine. Residue histidine 361 is the Proton acceptor of the active site. The UDP-N-acetyl-alpha-D-glucosamine site is built by tyrosine 364 and asparagine 375. Acetyl-CoA-binding positions include alanine 378, 384-385 (NY), serine 403, alanine 421, and arginine 438.

It in the N-terminal section; belongs to the N-acetylglucosamine-1-phosphate uridyltransferase family. In the C-terminal section; belongs to the transferase hexapeptide repeat family. As to quaternary structure, homotrimer. It depends on Mg(2+) as a cofactor.

Its subcellular location is the cytoplasm. It carries out the reaction alpha-D-glucosamine 1-phosphate + acetyl-CoA = N-acetyl-alpha-D-glucosamine 1-phosphate + CoA + H(+). The enzyme catalyses N-acetyl-alpha-D-glucosamine 1-phosphate + UTP + H(+) = UDP-N-acetyl-alpha-D-glucosamine + diphosphate. The protein operates within nucleotide-sugar biosynthesis; UDP-N-acetyl-alpha-D-glucosamine biosynthesis; N-acetyl-alpha-D-glucosamine 1-phosphate from alpha-D-glucosamine 6-phosphate (route II): step 2/2. Its pathway is nucleotide-sugar biosynthesis; UDP-N-acetyl-alpha-D-glucosamine biosynthesis; UDP-N-acetyl-alpha-D-glucosamine from N-acetyl-alpha-D-glucosamine 1-phosphate: step 1/1. It functions in the pathway bacterial outer membrane biogenesis; LPS lipid A biosynthesis. Functionally, catalyzes the last two sequential reactions in the de novo biosynthetic pathway for UDP-N-acetylglucosamine (UDP-GlcNAc). The C-terminal domain catalyzes the transfer of acetyl group from acetyl coenzyme A to glucosamine-1-phosphate (GlcN-1-P) to produce N-acetylglucosamine-1-phosphate (GlcNAc-1-P), which is converted into UDP-GlcNAc by the transfer of uridine 5-monophosphate (from uridine 5-triphosphate), a reaction catalyzed by the N-terminal domain. The polypeptide is Bifunctional protein GlmU (Actinobacillus pleuropneumoniae serotype 7 (strain AP76)).